Reading from the N-terminus, the 530-residue chain is [Pyruvate dehydrogenase [acetyl-transferring]]-phosphatase 2, mitochondrial (530 aa).

Residues 1 to 67 (MSSTASYRIF…FALRKAYRHT (67 aa)) constitute a mitochondrion transit peptide. In terms of domain architecture, PPM-type phosphatase spans 107 to 518 (VLRFESNQLA…DDITVMVVFF (412 aa)). Positions 142, 143, 413, and 509 each coordinate Mn(2+).

Belongs to the PP2C family. Mg(2+) is required as a cofactor. As to expression, highly expressed in liver.

Its subcellular location is the mitochondrion. The enzyme catalyses O-phospho-L-seryl-[pyruvate dehydrogenase E1 alpha subunit] + H2O = L-seryl-[pyruvate dehydrogenase E1 alpha subunit] + phosphate. Its activity is regulated as follows. Mg(2+)-dependent protein phosphatase. Phosphatase activity is increased in the presence of spermine, a naturally produced polyamine. Its function is as follows. Mitochondrial enzyme that catalyzes the dephosphorylation and concomitant reactivation of the alpha subunit of the E1 component of the pyruvate dehydrogenase complex (PDC), thereby stimulating the conversion of pyruvate into acetyl-CoA. Acts as a crucial regulator of T cell metabolism and function, with a particular focus on T-helper Th17. The chain is [Pyruvate dehydrogenase [acetyl-transferring]]-phosphatase 2, mitochondrial (Pdp2) from Rattus norvegicus (Rat).